Reading from the N-terminus, the 168-residue chain is Disulfide bond formation protein B 2 (168 aa).

Residues 1–9 (MSLACLRSF) are Cytoplasmic-facing. A helical transmembrane segment spans residues 10 to 26 (FLPALLASTAVLVASFH). The Periplasmic segment spans residues 27–44 (LESVVGLVPCALCFSQRL). Residues cysteine 36 and cysteine 39 are joined by a disulfide bond. A helical membrane pass occupies residues 45–61 (MLGVYALVCLAALVHSP). Over 62-67 (AARGRR) the chain is Cytoplasmic. Residues 68-85 (AYAGLALASAFGGALLAG) form a helical membrane-spanning segment. Topologically, residues 86–140 (RHVWLQGDPQVVDGCHLPVEQVLQRPLGEILQMFLLGSPDCVSISWSFLDLTLPE) are periplasmic. The cysteines at positions 100 and 126 are disulfide-linked. A helical membrane pass occupies residues 141 to 159 (WSLLAFLLLAAMPLSWLVA). The Cytoplasmic portion of the chain corresponds to 160-168 (YRFRKRAMA).

This sequence belongs to the DsbB family.

Its subcellular location is the cell inner membrane. Required for disulfide bond formation in some periplasmic proteins. Acts by oxidizing the DsbA protein. This chain is Disulfide bond formation protein B 2, found in Pseudomonas entomophila (strain L48).